Consider the following 467-residue polypeptide: Rhamnulokinase (467 aa).

Residue 11–15 coordinates ATP; that stretch reads ASSGR. Substrate contacts are provided by residues Ala78 and 235-237; that span reads HDT. The active-site Proton acceptor is Asp236. Thr257 contacts ATP. Substrate is bound at residue Asn294. Position 302 (Gln302) interacts with ATP. Cys351 and Cys368 are oxidised to a cystine. Gly400 lines the ATP pocket.

The protein belongs to the rhamnulokinase family. Requires Mg(2+) as cofactor.

It catalyses the reaction L-rhamnulose + ATP = L-rhamnulose 1-phosphate + ADP + H(+). Its pathway is carbohydrate degradation; L-rhamnose degradation; glycerone phosphate from L-rhamnose: step 2/3. Involved in the catabolism of L-rhamnose (6-deoxy-L-mannose). Catalyzes the transfer of the gamma-phosphate group from ATP to the 1-hydroxyl group of L-rhamnulose to yield L-rhamnulose 1-phosphate. This Halalkalibacterium halodurans (strain ATCC BAA-125 / DSM 18197 / FERM 7344 / JCM 9153 / C-125) (Bacillus halodurans) protein is Rhamnulokinase.